The following is a 585-amino-acid chain: MSHQPLSCLTEKGDSSCETPGNGPSNMVHPNLDTFTPEELLQQMKELLVENHQLKEAMKLNNQAMKGRFEELSAWTEKQKEERQLFEIQSKEAKERLKALSHENERLKEELGKLKEKSERPFEDITGRCGFPRTDLEQEVEQLKRQVEQEVEHLKIQVRRLQAEKADLLGIVSELQLKLNSGGSSEDSFVEIRMTEGEAEGAMKEMRNSAGPTRTDSISMGKCTEDARTCVEFEELTVSQLLLCLREGNQKVERLEIALREAKERISDFEKKANGHSAIETQTEGSTQKEEEDKDPESVGIEVETLNVQVASLFKELQEAHTKLSEAELMKKRLQEKCQALERKNSATPSELNEKQELVYSNRKLELQVESMRSEIKMEQAKTEEEKSRLATLQATHDKLLQEHNKALRTIEELTKQQAEKVDKVQLQELSEKLELAEQALASKQLQMDEMKQTIAKQEEDLETMAVLRAQMEVYCSDFHAERAAREKIHEEKEQLALQLAILLKENNDFEDGGSRQSLMEMQCRHGARTSDSDQQAYLFQRGAEDMSWQHGQQPRSIPIHSCPKCGEVLPDIDTLQIHVMDCII.

Residues 1–32 (MSHQPLSCLTEKGDSSCETPGNGPSNMVHPNL) form a disordered region. The segment covering 16 to 25 (SCETPGNGPS) has biased composition (polar residues). The stretch at 38 to 181 (EELLQQMKEL…VSELQLKLNS (144 aa)) forms a coiled coil. The tract at residues 58–220 (MKLNNQAMKG…GPTRTDSISM (163 aa)) is interaction with Rab8. Positions 187–192 (DSFVEI) match the LIR motif. Phosphoserine occurs at positions 188 and 209. 2 disordered regions span residues 200–220 (EGAM…SISM) and 269–299 (FEKK…PESV). Positions 244-512 (CLREGNQKVE…LLKENNDFED (269 aa)) form a coiled coil. Serine 346 is subject to Phosphoserine. Residues 415-585 (TKQQAEKVDK…LQIHVMDCII (171 aa)) form an interaction with HD region. The interaction with MYO6 stretch occupies residues 416 to 525 (KQQAEKVDKV…RQSLMEMQCR (110 aa)). A UBAN motif is present at residues 478 to 483 (DFHAER). Serine 531 is modified (phosphoserine). A CCHC NOA-type zinc finger spans residues 555–585 (PRSIPIHSCPKCGEVLPDIDTLQIHVMDCII). Cysteine 563, cysteine 566, histidine 579, and cysteine 583 together coordinate Zn(2+).

As to quaternary structure, self-associates. Interacts with HD. Interacts with GTF3A. Interacts with MYO6. Interacts (via UBAN) with ubiquitinated TFRC. Interacts with GTP-bound Rab8 (RAB8A and/or RAB8B). Interacts with TBC1D17. Interacts with TBK1. Interacts with TRAF3. Binds to linear ubiquitin chains. Interacts with LC3 family members MAP1LC3A, MAP1LC3B, GABARAP, GABARAPL1 and GABARAPL2; OPTN phosphorylation increases the association (at least with MAP1LC3B). Interacts with RAB12; the interaction may be indirect. Interacts with TBK1; this interaction leads to the Golgi localization of TBK1 and its subsequent activation. Interacts with palmitoyltransferase ZDHHC17/HIP14; the interaction does not lead to palmitoylation of OPTN. Interacts with CYLD. Interacts with TOM1; the interaction is indirect and is mediated by MYO6, which acts as a bridge between TOM1 and OPTN. Interacts with USP12; the interaction is independent of USP12 deubiquitinase activity and may be involved in regulation of autophagic flux. Post-translationally, phosphorylated by TBK1, leading to restrict bacterial proliferation in case of infection.

Its subcellular location is the cytoplasm. It localises to the perinuclear region. The protein resides in the golgi apparatus. The protein localises to the trans-Golgi network. It is found in the cytoplasmic vesicle. Its subcellular location is the autophagosome. It localises to the recycling endosome. Plays an important role in the maintenance of the Golgi complex, in membrane trafficking, in exocytosis, through its interaction with myosin VI and Rab8. Links myosin VI to the Golgi complex and plays an important role in Golgi ribbon formation. Negatively regulates the induction of IFNB in response to RNA virus infection. Plays a neuroprotective role in the eye and optic nerve. Probably part of the TNF-alpha signaling pathway that can shift the equilibrium toward induction of cell death. May act by regulating membrane trafficking and cellular morphogenesis via a complex that contains Rab8 and huntingtin (HD). Mediates the interaction of Rab8 with the probable GTPase-activating protein TBC1D17 during Rab8-mediated endocytic trafficking, such as that of transferrin receptor (TFRC/TfR); regulates Rab8 recruitment to tubules emanating from the endocytic recycling compartment. Autophagy receptor that interacts directly with both the cargo to become degraded and an autophagy modifier of the MAP1 LC3 family; targets ubiquitin-coated bacteria (xenophagy) and appears to function in the same pathway as SQSTM1 and CALCOCO2/NDP52. In Rattus norvegicus (Rat), this protein is Optineurin (Optn).